Here is a 188-residue protein sequence, read N- to C-terminus: U1 small nuclear ribonucleoprotein C-2 (188 aa).

A Matrin-type zinc finger spans residues 4-36 (YYCDYCDVFLVSESPSVRKAHNSGRNHLTNVRD). The disordered stretch occupies residues 57–188 (FETGGGNSTS…MNPDRARQLG (132 aa)). The span at 72-82 (GNPPGSQPGPP) shows a compositional bias: pro residues. The segment covering 109-124 (AMLALMNGQNGMSSPG) has biased composition (low complexity). Pro residues predominate over residues 125–141 (SGPPPMRFAGPPIPNNM).

This sequence belongs to the U1 small nuclear ribonucleoprotein C family. U1 snRNP is composed of the 7 core Sm proteins B/B', D1, D2, D3, E, F and G that assemble in a heptameric protein ring on the Sm site of the small nuclear RNA to form the core snRNP, and at least 3 U1 snRNP-specific proteins U1-70K, U1-A and U1-C. U1-C interacts with U1 snRNA and the 5' splice-site region of the pre-mRNA.

It localises to the nucleus. Component of the spliceosomal U1 snRNP, which is essential for recognition of the pre-mRNA 5' splice-site and the subsequent assembly of the spliceosome. U1-C is directly involved in initial 5' splice-site recognition for both constitutive and regulated alternative splicing. The interaction with the 5' splice-site seems to precede base-pairing between the pre-mRNA and the U1 snRNA. Stimulates commitment or early (E) complex formation by stabilizing the base pairing of the 5' end of the U1 snRNA and the 5' splice-site region. This Puccinia graminis f. sp. tritici (strain CRL 75-36-700-3 / race SCCL) (Black stem rust fungus) protein is U1 small nuclear ribonucleoprotein C-2.